A 155-amino-acid polypeptide reads, in one-letter code: Ribosome maturation factor RimP (155 aa).

The protein belongs to the RimP family.

It localises to the cytoplasm. In terms of biological role, required for maturation of 30S ribosomal subunits. The protein is Ribosome maturation factor RimP of Phocaeicola vulgatus (strain ATCC 8482 / DSM 1447 / JCM 5826 / CCUG 4940 / NBRC 14291 / NCTC 11154) (Bacteroides vulgatus).